The sequence spans 800 residues: Protein translocase subunit SecA (800 aa).

Residues glutamine 85, 103–107 (GEGKT), and aspartate 504 contribute to the ATP site.

The protein belongs to the SecA family. Monomer and homodimer. Part of the essential Sec protein translocation apparatus which comprises SecA, SecYEG and auxiliary proteins SecDF. Other proteins may also be involved.

It localises to the cell membrane. It is found in the cytoplasm. It carries out the reaction ATP + H2O + cellular proteinSide 1 = ADP + phosphate + cellular proteinSide 2.. Functionally, part of the Sec protein translocase complex. Interacts with the SecYEG preprotein conducting channel. Has a central role in coupling the hydrolysis of ATP to the transfer of proteins into and across the cell membrane, serving as an ATP-driven molecular motor driving the stepwise translocation of polypeptide chains across the membrane. The polypeptide is Protein translocase subunit SecA (Lactobacillus delbrueckii subsp. bulgaricus (strain ATCC 11842 / DSM 20081 / BCRC 10696 / JCM 1002 / NBRC 13953 / NCIMB 11778 / NCTC 12712 / WDCM 00102 / Lb 14)).